Reading from the N-terminus, the 433-residue chain is Phosphomethylpyrimidine synthase (433 aa).

Residues asparagine 69, methionine 98, tyrosine 127, histidine 163, 185 to 187 (SRG), 226 to 229 (DALR), and glutamate 265 contribute to the substrate site. Zn(2+) is bound at residue histidine 269. Tyrosine 292 serves as a coordination point for substrate. A Zn(2+)-binding site is contributed by histidine 333. The [4Fe-4S] cluster site is built by cysteine 409, cysteine 412, and cysteine 416.

The protein belongs to the ThiC family. The cofactor is [4Fe-4S] cluster.

It carries out the reaction 5-amino-1-(5-phospho-beta-D-ribosyl)imidazole + S-adenosyl-L-methionine = 4-amino-2-methyl-5-(phosphooxymethyl)pyrimidine + CO + 5'-deoxyadenosine + formate + L-methionine + 3 H(+). Its pathway is cofactor biosynthesis; thiamine diphosphate biosynthesis. Catalyzes the synthesis of the hydroxymethylpyrimidine phosphate (HMP-P) moiety of thiamine from aminoimidazole ribotide (AIR) in a radical S-adenosyl-L-methionine (SAM)-dependent reaction. This is Phosphomethylpyrimidine synthase from Finegoldia magna (strain ATCC 29328 / DSM 20472 / WAL 2508) (Peptostreptococcus magnus).